A 255-amino-acid polypeptide reads, in one-letter code: Proteasome subunit alpha (255 aa).

The interval 228–255 (LLASPAGTSGPTGEPGPAGTAATDGGDL) is disordered. The span at 232–255 (PAGTSGPTGEPGPAGTAATDGGDL) shows a compositional bias: low complexity.

This sequence belongs to the peptidase T1A family. In terms of assembly, the 20S proteasome core is composed of 14 alpha and 14 beta subunits that assemble into four stacked heptameric rings, resulting in a barrel-shaped structure. The two inner rings, each composed of seven catalytic beta subunits, are sandwiched by two outer rings, each composed of seven alpha subunits. The catalytic chamber with the active sites is on the inside of the barrel. Has a gated structure, the ends of the cylinder being occluded by the N-termini of the alpha-subunits. Is capped by the proteasome-associated ATPase, ARC.

The protein resides in the cytoplasm. It functions in the pathway protein degradation; proteasomal Pup-dependent pathway. The formation of the proteasomal ATPase ARC-20S proteasome complex, likely via the docking of the C-termini of ARC into the intersubunit pockets in the alpha-rings, may trigger opening of the gate for substrate entry. Interconversion between the open-gate and close-gate conformations leads to a dynamic regulation of the 20S proteasome proteolysis activity. In terms of biological role, component of the proteasome core, a large protease complex with broad specificity involved in protein degradation. This Sanguibacter keddieii (strain ATCC 51767 / DSM 10542 / NCFB 3025 / ST-74) protein is Proteasome subunit alpha.